We begin with the raw amino-acid sequence, 781 residues long: Catenin beta-1 (781 aa).

Position 2 is an N-acetylalanine (alanine 2). The interval 2 to 23 is interaction with VCL; sequence ATQADLMELDMAMEPDRKAAVS. Serine 23 is subject to Phosphoserine; by GSK3-beta; alternate. A glycan (O-linked (GlcNAc) serine; alternate) is linked at serine 23. Phosphoserine; by GSK3-beta is present on serine 29. A phosphoserine; by GSK3-beta and HIPK2 mark is found at serine 33 and serine 37. Residues 34–57 form a disordered region; it reads GIHSGATTTAPSLSGKGNPEEEDV. A Phosphothreonine; by GSK3-beta modification is found at threonine 41. Residue serine 45 is modified to Phosphoserine. Position 49 is an N6-acetyllysine (lysine 49). Residue tyrosine 64 is modified to Phosphotyrosine; by PTK6. The residue at position 142 (tyrosine 142) is a Phosphotyrosine; by FYN and PTK6. ARM repeat units lie at residues 151–191, 193–234, 235–276, 277–318, 319–360, 361–389, 400–441, 442–484, 489–530, 531–571, 594–636, and 637–666; these read RAIP…IMRS, QMVS…IFKS, GGIP…VRLA, GGLQ…ILAS, GGPQ…IVEA, GGMQ…RNLS, GLLG…VCQV, GGIE…AQNA, YGLP…LREQ, GAIP…EIVE, NTIP…AEGA, and TAPL…SEDK. The tract at residues 156–178 is interaction with BCL9; sequence LTKLLNDEDQVVVNKAAVMVHQL. Phosphoserine is present on serine 191. Phosphoserine; by CDK5 is present on serine 246. Residues tyrosine 331 and tyrosine 333 each carry the phosphotyrosine modification. Serine 552 bears the Phosphoserine; by AMPK mark. Threonine 556 carries the phosphothreonine modification. S-nitrosocysteine is present on cysteine 619. At serine 675 the chain carries Phosphoserine. A disordered region spans residues 720–781; it reads HSGGYGQDAL…NQLAWFDTDL (62 aa). Residues 734 to 745 are compositionally biased toward basic and acidic residues; that stretch reads MMEHEMGGHHPG. Residues 772–781 form an interaction with SCRIB region; sequence NQLAWFDTDL.

The protein belongs to the beta-catenin family. Two separate complex-associated pools are found in the cytoplasm. The majority is present as component of an E-cadherin/ catenin adhesion complex composed of at least E-cadherin/CDH1 and beta-catenin/CTNNB1, and possibly alpha-catenin/CTNNA1; the complex is located to adherens junctions. The stable association of CTNNA1 is controversial as CTNNA1 was shown not to bind to F-actin when assembled in the complex. Alternatively, the CTNNA1-containing complex may be linked to F-actin by other proteins such as LIMA1. Binds NHERF1. Interacts with PTPRU (via the cytoplasmic juxtamembrane domain) and with EMD. Interacts with SESTD1 and TRPC4. Interacts with CAV1. Interacts with PTPRJ. Interacts with PKT7. Interacts with FAT1 (via the cytoplasmic domain). Interacts with CDK2, NDRG2 and NANOS1. Interacts with NEK2 and CDK5. Interacts with CARM1, CXADR, PCDH11Y and PTK6. Interacts with RAPGEF2. Interacts with SOX7; this interaction may lead to proteasomal degradation of active CTNNB1 and thus inhibition of Wnt/beta-catenin-stimulated transcription. Identified in a complex with HINT1 and MITF. Interacts with FHIT. Interacts with FERMT2. Identified in a complex with TCF4 and FERMT2. Another cytoplasmic pool is part of a large complex containing AXIN1, AXIN2, APC, CSNK1A1 and GSK3B that promotes phosphorylation on N-terminal Ser and Thr residues and ubiquitination of CTNNB1 via BTRC and its subsequent degradation by the proteasome. Wnt-dependent activation of DVL antagonizes the action of GSK3B. When GSK3B activity is inhibited the complex dissociates, CTNNB1 is dephosphorylated and is no longer targeted for destruction. The stabilized protein translocates to the nucleus, where it binds TCF/LEF-1 family members, BCL9, BCL9L and possibly also RUVBL1 and CHD8. Interacts with TAX1BP3 (via the PDZ domain); this interaction inhibits the transcriptional activity of CTNNB1. Interacts with AJAP1, BAIAP1 and CTNNA3. Interacts with TRPV4; the TRPV4 and CTNNB1 complex can interact with CDH1. Interacts with VCL. The CTNNB1 and TCF4 complex interacts with PML. Interacts with XIRP1. Binds CTNNBIP and EP300. CTNNB1 forms a ternary complex with LEF1 and EP300 that is disrupted by CTNNBIP1 binding. Interacts directly with AXIN1; the interaction is regulated by CDK2 phosphorylation of AXIN1. Interacts with GLIS2. Interacts with SCRIB. Interacts with TNIK and TCF7L2. Interacts with SLC30A9. Interacts with RORA. May interact with P-cadherin/CDH3. Interacts with RNF220. Interacts with CTNND2. Interacts (via the C-terminal region) with CBY1. The complex composed, at least, of APC, CTNNB1 and GSK3B interacts with JPT1; the interaction requires the inactive form of GSK3B (phosphorylated at 'Ser-9'). Interacts with DLG5. Interacts with FAM53B; promoting translocation to the nucleus. Interacts with TMEM170B. Interacts with AHI1. Interacts with GID8. Component of an cadherin:catenin adhesion complex composed of at least of CDH26, beta-catenin/CTNNB1, alpha-catenin/CTNNA1 and p120 catenin/CTNND1. Forms a complex comprising APPL1, RUVBL2, APPL2, HDAC1 and HDAC2. Interacts with IRF2BPL; mediates the ubiquitination and degradation of CTNNB1. Interacts with AMFR. Interacts with LMBR1L. Interacts with SOX30; prevents interaction of CTNNB1 with TCF7L2/TCF4 and leads to inhibition of Wnt signaling. Interacts with SOX9; inhibiting CTNNB1 activity by competing with the binding sites of TCF/LEF within CTNNB1, thereby inhibiting the Wnt signaling. Interacts with SPN/CD43 cytoplasmic tail. Interacts (when phosphorylated at Tyr-333) with isoform M2 of PKM (PKM2); promoting transcription activation. Interacts with PKP2 (via HEAD domain). Interacts with CDH1. Interacts (when unphosphorylated) with FLYWCH1, perhaps preventing interaction of CTNNB1 with TCF4, and thereby regulating transcription activation; phosphorylation of CTNNB1 may inhibit the interaction. Interacts (via the central armadillo domains) with probable transcriptional regulator ADNP (via N-terminal region); interaction is direct and stabilizes CTNNB1 by modulating its phosphorylation by glycogen synthase kinase-3 beta GSK3B. Interacts with NR5A2. Interacts with DSG2; the interaction promotes localization of CTNNB1 at cell junctions thus reducing its nuclear localization and subsequent transcription of CTNNB1/TCF-target genes. In terms of processing, phosphorylation at Ser-552 by AMPK promotes stabilization of the protein, enhancing TCF/LEF-mediated transcription. Phosphorylation by GSK3B requires prior phosphorylation of Ser-45 by another kinase. Phosphorylation proceeds then from Thr-41 to Ser-37 and Ser-33. Phosphorylated by NEK2. EGF stimulates tyrosine phosphorylation. Phosphorylated on Ser-33 and Ser-37 by HIPK2 and GSK3B, this phosphorylation triggers proteasomal degradation. Phosphorylation on Ser-191 and Ser-246 by CDK5. Phosphorylation by CDK2 regulates insulin internalization. Phosphorylation by PTK6 at Tyr-64, Tyr-142, Tyr-331 and/or Tyr-333 with the predominant site at Tyr-64 is not essential for inhibition of transcriptional activity. Phosphorylation by SRC at Tyr-333 promotes interaction with isoform M2 of PKM (PKM2); promoting transcription activation. Ubiquitinated by the SCF(BTRC) E3 ligase complex when phosphorylated by GSK3B, leading to its degradation. Ubiquitinated by a E3 ubiquitin ligase complex containing UBE2D1, SIAH1, CACYBP/SIP, SKP1, APC and TBL1X, leading to its subsequent proteasomal degradation. Ubiquitinated and degraded following interaction with SOX9. Ubiquitinated via 'Lys-11'- and 'Lys-29'-linked ubiquitin chains by UBR5, leading to its stabilization. Post-translationally, S-nitrosylation at Cys-619 within adherens junctions promotes VEGF-induced, NO-dependent endothelial cell permeability by disrupting interaction with E-cadherin, thus mediating disassembly adherens junctions. In terms of processing, O-glycosylation at Ser-23 decreases nuclear localization and transcriptional activity, and increases localization to the plasma membrane and interaction with E-cadherin CDH1. Deacetylated at Lys-49 by SIRT1. Expressed in cerebellar granule neurons (at protein level). Expressed in the intestinal epithelium (at protein level). Abundantly expressed in the tooth, skin, lung, kidney, eye and brain with weak expression in the liver and heart.

Its subcellular location is the cytoplasm. The protein localises to the nucleus. It is found in the cytoskeleton. The protein resides in the cell junction. It localises to the adherens junction. Its subcellular location is the cell membrane. The protein localises to the microtubule organizing center. It is found in the centrosome. The protein resides in the spindle pole. It localises to the synapse. Its subcellular location is the cilium basal body. In terms of biological role, key downstream component of the canonical Wnt signaling pathway. In the absence of Wnt, forms a complex with AXIN1, AXIN2, APC, CSNK1A1 and GSK3B that promotes phosphorylation on N-terminal Ser and Thr residues and ubiquitination of CTNNB1 via BTRC and its subsequent degradation by the proteasome. In the presence of Wnt ligand, CTNNB1 is not ubiquitinated and accumulates in the nucleus, where it acts as a coactivator for transcription factors of the TCF/LEF family, leading to activate Wnt responsive genes. Also acts as a coactivator for other transcription factors, such as NR5A2. Promotes epithelial to mesenchymal transition/mesenchymal to epithelial transition (EMT/MET) via driving transcription of CTNNB1/TCF-target genes. Involved in the regulation of cell adhesion, as component of an E-cadherin:catenin adhesion complex. Acts as a negative regulator of centrosome cohesion. Involved in the CDK2/PTPN6/CTNNB1/CEACAM1 pathway of insulin internalization. Blocks anoikis of malignant kidney and intestinal epithelial cells and promotes their anchorage-independent growth by down-regulating DAPK2. Disrupts PML function and PML-NB formation by inhibiting RANBP2-mediated sumoylation of PML. Promotes neurogenesis by maintaining sympathetic neuroblasts within the cell cycle. Involved in chondrocyte differentiation via interaction with SOX9: SOX9-binding competes with the binding sites of TCF/LEF within CTNNB1, thereby inhibiting the Wnt signaling. Acts as a positive regulator of odontoblast differentiation during mesenchymal tooth germ formation, via promoting the transcription of differentiation factors such as LEF1, BMP2 and BMP4. Activity is repressed in a MSX1-mediated manner at the bell stage of mesenchymal tooth germ formation which prevents premature differentiation of odontoblasts. The protein is Catenin beta-1 of Mus musculus (Mouse).